The following is a 428-amino-acid chain: MAGAASSDRLVTSFPLLDTADLFQDLSLGSDANEVPMNFTKGSFQHPYGHAPYGASSHGSERRPNMNAGNLLNGGDSIGSYPWGYIPANYPSGGYPDPRFGYDRNSNHSSFSHLMNPHSSQEVPSFDQLGYNDHLYSNHGLYGLYGNVIDSGHAYGTFGYDSWKLGRGWYPVDGYRKTRSFNHGRGYSDEKADRLNELCRGPRSSDFKNPQVLNSSMLDAMKQDVSAVDLQRYNGENFPESFVKAKFFVIKSYSEDDVHNCIKYGAWSSTPTGNKKLNAAYYEAKENSQECPVYLLFSVNASGQFVGLAEMVGPVDFNKTMEYWQQDKWIGCFPVKWHIIKDIPNSLLRHITLANNENKPVTNSRDTQEVNLEHGTKIIKIFKEYMSKTCILDDYKFYETRQKIIRDKKIKQKKQALDGASGETINLS.

The YTH domain maps to 245 to 382; sequence AKFFVIKSYS…EHGTKIIKIF (138 aa). RNA is bound by residues 251–253, Asp257, 267–268, Asn300, Trp324, Trp329, and Trp337; these read KSY and WS.

As to quaternary structure, interacts (via C-terminus) with CIPK1. Expressed in root apex, shoot apex, lateral root primordia, stamens, carpels and trichomes.

Its subcellular location is the nucleus. The protein localises to the cytoplasm. Functionally, specifically recognizes and binds N6-methyladenosine (m6A)-containing RNAs, and regulates mRNA stability. M6A is a modification present at internal sites of mRNAs and some non-coding RNAs and plays a role in mRNA stability and processing. This chain is YTH domain-containing protein ECT1, found in Arabidopsis thaliana (Mouse-ear cress).